Here is a 296-residue protein sequence, read N- to C-terminus: Protease HtpX homolog (296 aa).

Helical transmembrane passes span 14–34 (VVLL…VGYL) and 39–59 (YQFG…SMIF). Residue histidine 143 coordinates Zn(2+). Residue glutamate 144 is part of the active site. Histidine 147 is a binding site for Zn(2+). Transmembrane regions (helical) follow at residues 158 to 178 (IAVA…RMLF) and 195 to 215 (ILVL…ASLV). Glutamate 224 is a binding site for Zn(2+).

Belongs to the peptidase M48B family. It depends on Zn(2+) as a cofactor.

The protein localises to the cell membrane. In Streptococcus agalactiae serotype Ia (strain ATCC 27591 / A909 / CDC SS700), this protein is Protease HtpX homolog.